The primary structure comprises 121 residues: Large ribosomal subunit protein bL21c (121 aa).

This sequence belongs to the bacterial ribosomal protein bL21 family. Part of the 50S ribosomal subunit.

Its subcellular location is the plastid. The protein localises to the chloroplast. Functionally, this protein binds to 23S rRNA. This is Large ribosomal subunit protein bL21c from Huperzia lucidula (Shining clubmoss).